A 268-amino-acid chain; its full sequence is NH(3)-dependent NAD(+) synthetase (268 aa).

46-53 (GVSGGQDS) contacts ATP. Residue Asp-52 participates in Mg(2+) binding. Arg-140 is a binding site for deamido-NAD(+). Thr-160 serves as a coordination point for ATP. Glu-165 is a binding site for Mg(2+). Residues Lys-173 and Asp-180 each contribute to the deamido-NAD(+) site. Residue Lys-189 coordinates ATP. A deamido-NAD(+)-binding site is contributed by 260-261 (HK).

It belongs to the NAD synthetase family. Homodimer.

It carries out the reaction deamido-NAD(+) + NH4(+) + ATP = AMP + diphosphate + NAD(+) + H(+). The protein operates within cofactor biosynthesis; NAD(+) biosynthesis; NAD(+) from deamido-NAD(+) (ammonia route): step 1/1. Catalyzes the ATP-dependent amidation of deamido-NAD to form NAD. Uses ammonia as a nitrogen source. This Buchnera aphidicola subsp. Acyrthosiphon pisum (strain Tuc7) protein is NH(3)-dependent NAD(+) synthetase.